The sequence spans 481 residues: MPQTSVVFSSILGPSCSGQVQPGMGERGGGAGGGSGDLIFQDGHLISGSLEALMEHLVPTVDYYPDRTYIFTFLLSSRVFMPPHDLLARVGQICVEQKQQLEAGPEKAKLKSFSAKIVQLLKEWTEAFPYDFQDEKAMAELKAITHRVTQCDEENGTVKKAIAQMTQSLLLSLAARSQLQELREKLRPPAVDKGPILKTKPPAAQKDILGVCCDPLVLAQQLTHIELDRVSSIYPEDLMQIVSHMDSLDNHRCRGDLTKTYSLEAYDNWFNCLSMLVATEVCRVVKKKHRTRMLEFFIDVARECFNIGNFNSMMAIISGMNLSPVARLKKTWSKVKTAKFDVLEHHMDPSSNFCNYRTALQGATQRSQMANSSREKIVIPVFNLFVKDIYFLHKIHTNHLPNGHINFKKFWEISRQIHEFMTWTQVECPFEKDKKIQSYLLTAPIYSEEALFVASFESEGPENHMEKDSWKTLRTTLLNRA.

Positions 41-170 (QDGHLISGSL…AIAQMTQSLL (130 aa)) constitute an N-terminal Ras-GEF domain. Residues 214-461 (DPLVLAQQLT…FVASFESEGP (248 aa)) enclose the Ras-GEF domain.

Detected in brain and spinal cord. Highly expressed in a number of intrahepatic cholangiocarcinoma tissue biopsies.

Its function is as follows. Guanine nucleotide exchange factor (GEF) with specificity for RAP2A, KRAS, HRAS, and NRAS (in vitro). Plays a role in cell migration. The protein is Ras-GEF domain-containing family member 1A (RASGEF1A) of Homo sapiens (Human).